We begin with the raw amino-acid sequence, 190 residues long: Holliday junction branch migration complex subunit RuvA (190 aa).

The interval 1–63 is domain I; it reads MLDFIKGKVI…EESIEIYGFL (63 aa). Positions 64–139 are domain II; sequence ESSERDLFEE…ILPSLQYEKD (76 aa). Position 139 (Asp139) is a region of interest, flexible linker. Positions 139 to 190 are domain III; sequence DQKYDDILSALLNLGYKRLEAKEVLDKIYNNEKDEATIIRESLSILAGKDGK.

The protein belongs to the RuvA family. As to quaternary structure, homotetramer. Forms an RuvA(8)-RuvB(12)-Holliday junction (HJ) complex. HJ DNA is sandwiched between 2 RuvA tetramers; dsDNA enters through RuvA and exits via RuvB. An RuvB hexamer assembles on each DNA strand where it exits the tetramer. Each RuvB hexamer is contacted by two RuvA subunits (via domain III) on 2 adjacent RuvB subunits; this complex drives branch migration. In the full resolvosome a probable DNA-RuvA(4)-RuvB(12)-RuvC(2) complex forms which resolves the HJ.

The protein localises to the cytoplasm. Functionally, the RuvA-RuvB-RuvC complex processes Holliday junction (HJ) DNA during genetic recombination and DNA repair, while the RuvA-RuvB complex plays an important role in the rescue of blocked DNA replication forks via replication fork reversal (RFR). RuvA specifically binds to HJ cruciform DNA, conferring on it an open structure. The RuvB hexamer acts as an ATP-dependent pump, pulling dsDNA into and through the RuvAB complex. HJ branch migration allows RuvC to scan DNA until it finds its consensus sequence, where it cleaves and resolves the cruciform DNA. In Thermodesulfovibrio yellowstonii (strain ATCC 51303 / DSM 11347 / YP87), this protein is Holliday junction branch migration complex subunit RuvA.